The following is a 494-amino-acid chain: Catalase isozyme 2 (494 aa).

The interval 1-29 (MDPCKFRPSSSFDTKTTTTNAGQPVWNDN) is disordered. Polar residues predominate over residues 8-22 (PSSSFDTKTTTTNAG). Catalysis depends on residues H65 and N138. Y348 is a heme binding site.

Belongs to the catalase family. As to quaternary structure, homotetramer. Heme is required as a cofactor.

It is found in the peroxisome. It localises to the glyoxysome. The catalysed reaction is 2 H2O2 = O2 + 2 H2O. In terms of biological role, occurs in almost all aerobically respiring organisms and serves to protect cells from the toxic effects of hydrogen peroxide. The polypeptide is Catalase isozyme 2 (CAT2) (Hordeum vulgare (Barley)).